The primary structure comprises 790 residues: Probable E3 ubiquitin-protein ligase MARCHF10 (790 aa).

The tract at residues 33–240 (LKRQEHKKEP…PQNEPHTALS (208 aa)) is disordered. Over residues 34–48 (KRQEHKKEPNEKKQE) the composition is skewed to basic and acidic residues. Residues 61 to 70 (FSSGSSCKQS) show a composition bias toward low complexity. A Phosphoserine modification is found at serine 78. The segment covering 218-227 (PLERQKKGDP) has biased composition (basic and acidic residues). A compositionally biased stretch (polar residues) spans 230–240 (RPQNEPHTALS). A coiled-coil region spans residues 284–308 (LSLNNEQENYDTEEETRTEEELLLA). Disordered stretches follow at residues 323–416 (GTSA…EDVS) and 507–569 (LSPI…RHLQ). Composition is skewed to polar residues over residues 355 to 370 (RKTSVTEPTTKQSSPG), 406 to 416 (GVTQVSAEDVS), and 511 to 520 (RNRNPSAASE). A compositionally biased stretch (basic and acidic residues) spans 521 to 533 (SHSEDTQGEEERA). Over residues 534-563 (STSQAQESPLLSDLPNPQSSMALGDSPSSP) the composition is skewed to polar residues. The RING-CH-type zinc finger occupies 633-703 (DSEEEGDLCR…EMCKQGLLVD (71 aa)). Zn(2+) contacts are provided by cysteine 641, cysteine 644, cysteine 659, cysteine 661, histidine 669, cysteine 672, cysteine 693, and cysteine 696. The disordered stretch occupies residues 757 to 790 (ERMSRNYPQPRPEESESSESGDGNESNVYPGRVI). Residues 774-783 (SESGDGNESN) are compositionally biased toward low complexity.

It carries out the reaction S-ubiquitinyl-[E2 ubiquitin-conjugating enzyme]-L-cysteine + [acceptor protein]-L-lysine = [E2 ubiquitin-conjugating enzyme]-L-cysteine + N(6)-ubiquitinyl-[acceptor protein]-L-lysine.. The protein operates within protein modification; protein ubiquitination. In terms of biological role, E3 ubiquitin-protein ligase. E3 ubiquitin ligases accept ubiquitin from an E2 ubiquitin-conjugating enzyme in the form of a thioester and then directly transfer the ubiquitin to targeted substrates. This Rattus norvegicus (Rat) protein is Probable E3 ubiquitin-protein ligase MARCHF10 (Marchf10).